Reading from the N-terminus, the 114-residue chain is T cell receptor beta variable 4-1 (114 aa).

The signal sequence occupies residues 1–21; sequence MGCRLLCCAVLCLLGAVPIDT. The Ig-like domain occupies 22–114; the sequence is EVTQTPKHLV…SALYLCASSQ (93 aa). Cys-42 and Cys-110 are disulfide-bonded. N-linked (GlcNAc...) asparagine glycosylation is found at Asn-76 and Asn-89.

As to quaternary structure, alpha-beta TR is a heterodimer composed of an alpha and beta chain; disulfide-linked. The alpha-beta TR is associated with the transmembrane signaling CD3 coreceptor proteins to form the TR-CD3 (TcR or TCR). The assembly of alpha-beta TR heterodimers with CD3 occurs in the endoplasmic reticulum where a single alpha-beta TR heterodimer associates with one CD3D-CD3E heterodimer, one CD3G-CD3E heterodimer and one CD247 homodimer forming a stable octameric structure. CD3D-CD3E and CD3G-CD3E heterodimers preferentially associate with TR alpha and TR beta chains, respectively. The association of the CD247 homodimer is the last step of TcR assembly in the endoplasmic reticulum and is required for transport to the cell surface.

It is found in the cell membrane. Functionally, v region of the variable domain of T cell receptor (TR) beta chain that participates in the antigen recognition. Alpha-beta T cell receptors are antigen specific receptors which are essential to the immune response and are present on the cell surface of T lymphocytes. Recognize peptide-major histocompatibility (MH) (pMH) complexes that are displayed by antigen presenting cells (APC), a prerequisite for efficient T cell adaptive immunity against pathogens. Binding of alpha-beta TR to pMH complex initiates TR-CD3 clustering on the cell surface and intracellular activation of LCK that phosphorylates the ITAM motifs of CD3G, CD3D, CD3E and CD247 enabling the recruitment of ZAP70. In turn ZAP70 phosphorylates LAT, which recruits numerous signaling molecules to form the LAT signalosome. The LAT signalosome propagates signal branching to three major signaling pathways, the calcium, the mitogen-activated protein kinase (MAPK) kinase and the nuclear factor NF-kappa-B (NF-kB) pathways, leading to the mobilization of transcription factors that are critical for gene expression and essential for T cell growth and differentiation. The T cell repertoire is generated in the thymus, by V-(D)-J rearrangement. This repertoire is then shaped by intrathymic selection events to generate a peripheral T cell pool of self-MH restricted, non-autoaggressive T cells. Post-thymic interaction of alpha-beta TR with the pMH complexes shapes TR structural and functional avidity. This is T cell receptor beta variable 4-1 from Homo sapiens (Human).